The chain runs to 326 residues: Vitamin B12 import system permease protein BtuC (326 aa).

The next 9 membrane-spanning stretches (helical) occupy residues 15–35 (WLLCLSVLMLLALLLSLCAGE), 61–81 (LAVLLVGAALAISGAVMQALF), 88–108 (PGLLGVSNGAGVGLIAAVLLG), 112–132 (LPNWALGLCAIAGALIITLIL), 146–166 (LLAGVALGIICSALMTWAIYF), 184–204 (GGVDWRQSWLMLALIPVLLWI), 240–260 (GWMVGVSVALAGAIGFIGLVI), 274–294 (VLLPGCALAGASALLLADVVA), and 302–322 (ELPIGVVTATLGAPVFIWLLL).

This sequence belongs to the binding-protein-dependent transport system permease family. FecCD subfamily. The complex is composed of two ATP-binding proteins (BtuD), two transmembrane proteins (BtuC) and a solute-binding protein (BtuF).

The protein localises to the cell inner membrane. Part of the ABC transporter complex BtuCDF involved in vitamin B12 import. Involved in the translocation of the substrate across the membrane. The sequence is that of Vitamin B12 import system permease protein BtuC from Escherichia coli (strain SE11).